The primary structure comprises 283 residues: Pantothenate synthetase (283 aa).

30 to 37 contacts ATP; the sequence is MGNLHDGH. The active-site Proton donor is the His37. (R)-pantoate is bound at residue Gln61. Gln61 contributes to the beta-alanine binding site. 149–152 is a binding site for ATP; that stretch reads GEKD. Residue Gln155 coordinates (R)-pantoate. 186–189 provides a ligand contact to ATP; it reads LSSR.

This sequence belongs to the pantothenate synthetase family. Homodimer.

It localises to the cytoplasm. The enzyme catalyses (R)-pantoate + beta-alanine + ATP = (R)-pantothenate + AMP + diphosphate + H(+). It participates in cofactor biosynthesis; (R)-pantothenate biosynthesis; (R)-pantothenate from (R)-pantoate and beta-alanine: step 1/1. Its function is as follows. Catalyzes the condensation of pantoate with beta-alanine in an ATP-dependent reaction via a pantoyl-adenylate intermediate. This is Pantothenate synthetase from Escherichia coli O6:H1 (strain CFT073 / ATCC 700928 / UPEC).